A 501-amino-acid chain; its full sequence is Glutamate--tRNA ligase (501 aa).

A 'HIGH' region motif is present at residues 21-31 (PSPTGTPHVGL). The 'KMSKS' region motif lies at 266–270 (KLSKR). ATP is bound at residue Lys269.

The protein belongs to the class-I aminoacyl-tRNA synthetase family. Glutamate--tRNA ligase type 1 subfamily. Monomer.

The protein resides in the cytoplasm. The catalysed reaction is tRNA(Glu) + L-glutamate + ATP = L-glutamyl-tRNA(Glu) + AMP + diphosphate. Functionally, catalyzes the attachment of glutamate to tRNA(Glu) in a two-step reaction: glutamate is first activated by ATP to form Glu-AMP and then transferred to the acceptor end of tRNA(Glu). The sequence is that of Glutamate--tRNA ligase from Kineococcus radiotolerans (strain ATCC BAA-149 / DSM 14245 / SRS30216).